Here is a 264-residue protein sequence, read N- to C-terminus: Phosphonoacetaldehyde hydrolase (264 aa).

The Nucleophile role is filled by D9. Mg(2+) contacts are provided by D9 and A11. K50 (schiff-base intermediate with substrate) is an active-site residue. D183 is a Mg(2+) binding site.

Belongs to the HAD-like hydrolase superfamily. PhnX family. Homodimer. It depends on Mg(2+) as a cofactor.

It carries out the reaction phosphonoacetaldehyde + H2O = acetaldehyde + phosphate + H(+). Its function is as follows. Involved in phosphonate degradation. The polypeptide is Phosphonoacetaldehyde hydrolase (Bacillus cereus (strain ATCC 10987 / NRS 248)).